Consider the following 142-residue polypeptide: SPbeta prophage-derived deoxyuridine 5'-triphosphate nucleotidohydrolase YosS (142 aa).

Positions 62 and 74 each coordinate dUMP. Asp-80 (proton acceptor) is an active-site residue. DUMP-binding residues include Tyr-83 and Phe-91.

It belongs to the dUTPase family. As to quaternary structure, homotrimer. Mg(2+) is required as a cofactor.

The enzyme catalyses dUTP + H2O = dUMP + diphosphate + H(+). It functions in the pathway pyrimidine metabolism; dUMP biosynthesis; dUMP from dCTP (dUTP route): step 2/2. Its function is as follows. Involved in nucleotide metabolism: produces dUMP, the immediate precursor of thymidine nucleotides and decreases the intracellular concentration of dUTP, so that uracil cannot be incorporated into DNA. The Ser-62 side chain changes its position upon ligand-binding to make contacts with the nucleotide phosphates. The protein is SPbeta prophage-derived deoxyuridine 5'-triphosphate nucleotidohydrolase YosS of Bacillus subtilis (strain 168).